We begin with the raw amino-acid sequence, 445 residues long: Glutamate-1-semialdehyde 2,1-aminomutase (445 aa).

Lys281 is modified (N6-(pyridoxal phosphate)lysine).

The protein belongs to the class-III pyridoxal-phosphate-dependent aminotransferase family. HemL subfamily. Homodimer. Pyridoxal 5'-phosphate serves as cofactor.

It is found in the cytoplasm. It catalyses the reaction (S)-4-amino-5-oxopentanoate = 5-aminolevulinate. Its pathway is porphyrin-containing compound metabolism; protoporphyrin-IX biosynthesis; 5-aminolevulinate from L-glutamyl-tRNA(Glu): step 2/2. The polypeptide is Glutamate-1-semialdehyde 2,1-aminomutase (Nocardioides sp. (strain ATCC BAA-499 / JS614)).